The chain runs to 466 residues: Tissue alpha-L-fucosidase (466 aa).

The N-terminal stretch at 1-31 (MRAPGMRSRPAGPALLLLLLFLGAAESVRRA) is a signal peptide. At Thr170 the chain carries Phosphothreonine. Asn241, Asn268, and Asn382 each carry an N-linked (GlcNAc...) asparagine glycan.

This sequence belongs to the glycosyl hydrolase 29 family. As to quaternary structure, homotetramer.

The protein localises to the lysosome. It carries out the reaction an alpha-L-fucoside + H2O = L-fucose + an alcohol. The enzyme catalyses a neolactoside IV(2)-alpha-Fuc-nLc4Cer(d18:1(4E)) + H2O = a neolactoside nLc4Cer(d18:1(4E)) + L-fucose. The catalysed reaction is a neolactoside IV(2)-alpha-Fuc-nLc4Cer(d18:0) + H2O = a neolactoside nLc4Cer(d18:0) + L-fucose. In terms of biological role, alpha-L-fucosidase is responsible for hydrolyzing the alpha-1,6-linked fucose joined to the reducing-end N-acetylglucosamine of the carbohydrate moieties of glycoproteins. The chain is Tissue alpha-L-fucosidase from Homo sapiens (Human).